We begin with the raw amino-acid sequence, 492 residues long: Forkhead box protein O6 (492 aa).

Disordered regions lie at residues 1 to 76, 163 to 235, 315 to 338, and 466 to 492; these read MAAK…EVGP, SWWM…ASPA, GAGL…APRP, and FNFD…WVPG. Positions 88-182 form a DNA-binding region, fork-head; it reads WGNLSYADLI…KTGKTPRRRA (95 aa). Ser184 bears the Phosphoserine mark. Residues 192–203 are compositionally biased toward basic residues; sequence LRIKGKASKKKQ. Residues 225 to 235 show a composition bias toward low complexity; it reads PAAAKWAASPA. The segment covering 472–486 has biased composition (pro residues); it reads LPPPPPGLAGAPPPN.

Phosphorylation of Ser-184 is be important in regulating the transacriptional activity.

The protein localises to the cytoplasm. Its subcellular location is the nucleus. Transcriptional activator. The polypeptide is Forkhead box protein O6 (FOXO6) (Homo sapiens (Human)).